The primary structure comprises 79 residues: Submaxillary gland androgen-regulated protein 3B (79 aa).

A signal peptide spans 1–22; it reads MKSLTWILGLWALAACFTPGES. The segment at 19-79 is disordered; sequence PGESQRGPRG…GIFPPPPPQP (61 aa). Glutamine 23 carries the post-translational modification Pyrrolidone carboxylic acid. Residues 28-79 are compositionally biased toward pro residues; sequence GPYPPGPLAPPQPFGPGFVPPPPPPPYGPGRIPPPPPAPYGPGIFPPPPPQP.

This sequence belongs to the PROL1/PROL3 family. Post-translationally, P-A and D1A are probably degradation products of P-B. Secreted into saliva by submaxillary gland. Not expressed in heart, brain, lung, liver, skeletal muscle, Kidney, pancreas or placenta.

The protein resides in the secreted. This Homo sapiens (Human) protein is Submaxillary gland androgen-regulated protein 3B (SMR3B).